Reading from the N-terminus, the 293-residue chain is Acetylglutamate kinase (293 aa).

Residues 68 to 69 (GG), R90, and N189 contribute to the substrate site.

The protein belongs to the acetylglutamate kinase family. ArgB subfamily.

It is found in the cytoplasm. It carries out the reaction N-acetyl-L-glutamate + ATP = N-acetyl-L-glutamyl 5-phosphate + ADP. Its pathway is amino-acid biosynthesis; L-arginine biosynthesis; N(2)-acetyl-L-ornithine from L-glutamate: step 2/4. In terms of biological role, catalyzes the ATP-dependent phosphorylation of N-acetyl-L-glutamate. In Mycolicibacterium smegmatis (strain ATCC 700084 / mc(2)155) (Mycobacterium smegmatis), this protein is Acetylglutamate kinase.